The chain runs to 80 residues: Exodeoxyribonuclease 7 small subunit (80 aa).

This sequence belongs to the XseB family. As to quaternary structure, heterooligomer composed of large and small subunits.

The protein localises to the cytoplasm. The enzyme catalyses Exonucleolytic cleavage in either 5'- to 3'- or 3'- to 5'-direction to yield nucleoside 5'-phosphates.. Bidirectionally degrades single-stranded DNA into large acid-insoluble oligonucleotides, which are then degraded further into small acid-soluble oligonucleotides. The chain is Exodeoxyribonuclease 7 small subunit from Pseudomonas putida (strain W619).